The chain runs to 299 residues: ClpXP adapter protein SpxH (299 aa).

This sequence belongs to the SpxH family. As to quaternary structure, interacts with Spx. Interacts with SpxO/YuzO.

The protein resides in the cytoplasm. Its activity is regulated as follows. Irreversible aggregation upon several stress conditions prevents interaction with Spx and therefore leads to Spx stabilization. Inhibited by interaction with SpxO/YuzO. Its function is as follows. Adapter protein required for efficient degradation of Spx by ClpXP under non-stress conditions. Interaction with Spx stabilizes Spx and exposes the C-terminus of Spx for recognition and proteolysis by ClpXP. Is specific for Spx and does not enhance proteolysis by ClpCP protease. Probably binds 2 zinc ions. In Bacillus subtilis (strain 168), this protein is ClpXP adapter protein SpxH.